Consider the following 442-residue polypeptide: MADICYEDETSACESRPLWSSRKWRIGVQRFRMSPSEMNPTASTTEEEDKSEGIYNKRNKQEEYDFMNCASSSPSQSSPEEESVSLEDSDVSISDGNSSVNDVAVIPSKKTVKETDLRPRYGVASVCGRRRDMEDAVALHPSFVRKQTEFSRTRWHYFGVYDGHGCSHVAARCKERLHELVQEEALSDKKEEWKKMMERSFTRMDKEVVRWGETVMSANCRCELQTPDCDAVGSTAVVSVITPEKIIVANCGDSRAVLCRNGKAVPLSTDHKPDRPDELDRIQEAGGRVIYWDGARVLGVLAMSRAIGDNYLKPYVTSEPEVTVTDRTEEDEFLILATDGLWDVVTNEAACTMVRMCLNRKSGRGRRRGETQTPGRRSEEEGKEEEEKVVGSRKNGKRGEITDKACTEASVLLTKLALAKHSSDNVSVVVIDLRRRRKRHVA.

Positions Arg30–Val100 are disordered. Acidic residues predominate over residues Pro79–Asp90. Positions Arg120 to Leu433 constitute a PPM-type phosphatase domain. Residues Asp162, Gly163, and Asp339 each contribute to the Mn(2+) site. The interval Gly363–Ile401 is disordered. Residues Arg376–Val390 are compositionally biased toward basic and acidic residues. Asp424 is a Mn(2+) binding site.

This sequence belongs to the PP2C family. As to quaternary structure, part of a K(+)-channel calcium-sensing kinase/phosphatase complex composed by a calcium sensor CBL (CBL1, CBL2, CBL3 or CBL9), a kinase CIPK (CIPK6, CIPK16 or CIPK23), a phosphatase PP2C (AIP1) and a K(+)-channel (AKT1). Interacts with AKT1 and CIPK23. Interacts with PYL8/RCAR3 in an abscisic acid-independent. Interacts with PYR1/RCAR11 in an abscisic acid-dependent manner. Requires Mg(2+) as cofactor. It depends on Mn(2+) as a cofactor. Expressed in shoot meristem, vascular tissues of cotyledons, and in primary roots surrounding the root meristem. Highly expressed in seeds.

Its subcellular location is the cell membrane. It is found in the cytoplasm. It localises to the nucleus. The catalysed reaction is O-phospho-L-seryl-[protein] + H2O = L-seryl-[protein] + phosphate. The enzyme catalyses O-phospho-L-threonyl-[protein] + H2O = L-threonyl-[protein] + phosphate. Its function is as follows. Involved in the negative regulation of the K(+) potassium channel AKT1 by its dephosphorylation, antagonistically to CIPK proteins (e.g. CIPK23). Functions as a positive regulator of abscisic acid-mediated cell signaling during seedling growth. Involved in the regulation of seed dormancy. Acts as a negative regulator of seed dormancy by inhibiting abscisic signaling and subsequently activating gibberellic acid signaling. The sequence is that of Protein phosphatase 2C 3 from Arabidopsis thaliana (Mouse-ear cress).